The following is a 154-amino-acid chain: 6,7-dimethyl-8-ribityllumazine synthase (154 aa).

5-amino-6-(D-ribitylamino)uracil contacts are provided by residues Phe-26, 60-62 (ALE), and 84-86 (CII). 89 to 90 (ET) is a binding site for (2S)-2-hydroxy-3-oxobutyl phosphate. His-92 serves as the catalytic Proton donor. Residue Asn-117 coordinates 5-amino-6-(D-ribitylamino)uracil. Arg-131 contributes to the (2S)-2-hydroxy-3-oxobutyl phosphate binding site.

It belongs to the DMRL synthase family.

It carries out the reaction (2S)-2-hydroxy-3-oxobutyl phosphate + 5-amino-6-(D-ribitylamino)uracil = 6,7-dimethyl-8-(1-D-ribityl)lumazine + phosphate + 2 H2O + H(+). It functions in the pathway cofactor biosynthesis; riboflavin biosynthesis; riboflavin from 2-hydroxy-3-oxobutyl phosphate and 5-amino-6-(D-ribitylamino)uracil: step 1/2. Functionally, catalyzes the formation of 6,7-dimethyl-8-ribityllumazine by condensation of 5-amino-6-(D-ribitylamino)uracil with 3,4-dihydroxy-2-butanone 4-phosphate. This is the penultimate step in the biosynthesis of riboflavin. The protein is 6,7-dimethyl-8-ribityllumazine synthase of Polaromonas sp. (strain JS666 / ATCC BAA-500).